The sequence spans 337 residues: UDP-3-O-acylglucosamine N-acyltransferase 1 (337 aa).

The Proton acceptor role is filled by His238.

Belongs to the transferase hexapeptide repeat family. LpxD subfamily. Homotrimer.

The catalysed reaction is a UDP-3-O-[(3R)-3-hydroxyacyl]-alpha-D-glucosamine + a (3R)-hydroxyacyl-[ACP] = a UDP-2-N,3-O-bis[(3R)-3-hydroxyacyl]-alpha-D-glucosamine + holo-[ACP] + H(+). The protein operates within bacterial outer membrane biogenesis; LPS lipid A biosynthesis. Functionally, catalyzes the N-acylation of UDP-3-O-acylglucosamine using 3-hydroxyacyl-ACP as the acyl donor. Is involved in the biosynthesis of lipid A, a phosphorylated glycolipid that anchors the lipopolysaccharide to the outer membrane of the cell. This chain is UDP-3-O-acylglucosamine N-acyltransferase 1, found in Koribacter versatilis (strain Ellin345).